Consider the following 233-residue polypeptide: Orotidine 5'-phosphate decarboxylase (233 aa).

Substrate contacts are provided by residues aspartate 11, lysine 34, 61–70 (DLKLHDIPNT), threonine 117, arginine 179, glutamine 189, glycine 209, and arginine 210. Lysine 63 serves as the catalytic Proton donor.

Belongs to the OMP decarboxylase family. Type 1 subfamily. Homodimer.

The catalysed reaction is orotidine 5'-phosphate + H(+) = UMP + CO2. Its pathway is pyrimidine metabolism; UMP biosynthesis via de novo pathway; UMP from orotate: step 2/2. In terms of biological role, catalyzes the decarboxylation of orotidine 5'-monophosphate (OMP) to uridine 5'-monophosphate (UMP). This is Orotidine 5'-phosphate decarboxylase from Streptococcus agalactiae serotype Ia (strain ATCC 27591 / A909 / CDC SS700).